The chain runs to 494 residues: Amidophosphoribosyltransferase (494 aa).

The propeptide occupies 1 to 10 (MFNYSGLNEE). Residue Cys-11 is the Nucleophile of the active site. The Glutamine amidotransferase type-2 domain occupies 11–231 (CGVFGIWNHP…AGEYVVINDK (221 aa)). Positions 294, 356, and 357 each coordinate Mg(2+).

In the C-terminal section; belongs to the purine/pyrimidine phosphoribosyltransferase family. The cofactor is Mg(2+).

The catalysed reaction is 5-phospho-beta-D-ribosylamine + L-glutamate + diphosphate = 5-phospho-alpha-D-ribose 1-diphosphate + L-glutamine + H2O. It participates in purine metabolism; IMP biosynthesis via de novo pathway; N(1)-(5-phospho-D-ribosyl)glycinamide from 5-phospho-alpha-D-ribose 1-diphosphate: step 1/2. In terms of biological role, catalyzes the formation of phosphoribosylamine from phosphoribosylpyrophosphate (PRPP) and glutamine. In Staphylococcus aureus (strain Mu50 / ATCC 700699), this protein is Amidophosphoribosyltransferase.